The chain runs to 1302 residues: Neuroglian (1302 aa).

The N-terminal stretch at 1–23 (MWRQSTILAALLVALLCAGSAES) is a signal peptide. Over 24–1138 (KGNRPPRITK…ANAGWFIGMM (1115 aa)) the chain is Extracellular. Ig-like C2-type domains are found at residues 29–133 (PRIT…AELN), 134–225 (AFKD…YKIG), 245–330 (PPVR…QSFS), 339–426 (PYFT…VYLN), 432–524 (PTIS…TRIT), and 521–610 (TRIT…ANLI). Cystine bridges form between Cys-59–Cys-111, Cys-155–Cys-212, Cys-268–Cys-317, and Cys-360–Cys-410. N-linked (GlcNAc...) asparagine glycosylation is found at Asn-182 and Asn-198. N-linked (GlcNAc...) asparagine glycans are attached at residues Asn-411 and Asn-448. Fibronectin type-III domains lie at 614 to 711 (VPNA…TQPD), 716 to 813 (NPDN…SGED), 818 to 915 (APTN…TPEG), 916 to 1017 (VPSP…LKDA), and 1021 to 1119 (APAT…TVEG). Cys-625 and Cys-706 are oxidised to a cystine. Asn-652 and Asn-683 each carry an N-linked (GlcNAc...) asparagine glycan. N-linked (GlcNAc...) asparagine glycosylation occurs at Asn-821. N-linked (GlcNAc...) asparagine glycosylation is present at Asn-1125. A helical membrane pass occupies residues 1139–1154 (LALAFIIILFIIICII). Over 1155 to 1302 (RRNRGGKYDV…AAAGAVATYV (148 aa)) the chain is Cytoplasmic. Over residues 1172 to 1182 (GRRDYPEEGGF) the composition is skewed to basic and acidic residues. Disordered stretches follow at residues 1172–1223 (GRRD…GDTG) and 1236–1291 (VPGK…ASNG). Residues 1188 to 1203 (PLDNKSAGRQSVSSAN) show a composition bias toward polar residues. Positions 1253–1275 (AAAHQAAPTAGGSGAAGSAAAAG) are enriched in low complexity.

In terms of assembly, forms a complex with Nrx-IV/Nrx and Cont. Forms a complex composed of septate junction proteins Nrx-IV/Nrx, Tsf2/MTf, Cont and Nrg during late embryogenesis. In terms of tissue distribution, restricted to the surface of neurons and glia in the developing nervous system. As to expression, restricted to non-neuronal tissues.

The protein resides in the cell membrane. It localises to the cell junction. Its subcellular location is the septate junction. Its function is as follows. Essential for septate junctions. Septate junctions, which are the equivalent of vertebrate tight junctions, are characterized by regular arrays of transverse structures that span the intermembrane space and form a physical barrier to diffusion. Required for formation of the hemolymph-brain barrier (the insect blood-brain barrier). Vital for embryonic development. Involved in the targeting for degradation or recycling of certain septate junction components, including kune and bou/boudin, by regulating their endocytosis. In terms of biological role, may play a role in neural and glial cell adhesion in the developing embryo. May be a more general cell adhesion molecule involved in non-neuronal tissues and imaginal disk morphogenesis. The sequence is that of Neuroglian (Nrg) from Drosophila melanogaster (Fruit fly).